The chain runs to 150 residues: Cytochrome c oxidase subunit 5A, mitochondrial (150 aa).

A mitochondrion-targeting transit peptide spans 1 to 41 (MLGAALRRCAVAATTWAGPRGLLHSARTPGPAAAIQSVRCY). Residues 2-17 (LGAALRRCAVAATTWA) carry the SIFI-degron motif. An N6-acetyllysine mark is found at Lys-87 and Lys-113. At Thr-141 the chain carries Phosphothreonine.

The protein belongs to the cytochrome c oxidase subunit 5A family. Component of the cytochrome c oxidase (complex IV, CIV), a multisubunit enzyme composed of 14 subunits. The complex is composed of a catalytic core of 3 subunits MT-CO1, MT-CO2 and MT-CO3, encoded in the mitochondrial DNA, and 11 supernumerary subunits COX4I, COX5A, COX5B, COX6A, COX6B, COX6C, COX7A, COX7B, COX7C, COX8 and NDUFA4, which are encoded in the nuclear genome. The complex exists as a monomer or a dimer and forms supercomplexes (SCs) in the inner mitochondrial membrane with NADH-ubiquinone oxidoreductase (complex I, CI) and ubiquinol-cytochrome c oxidoreductase (cytochrome b-c1 complex, complex III, CIII), resulting in different assemblies (supercomplex SCI(1)III(2)IV(1) and megacomplex MCI(2)III(2)IV(2)). Interacts with AFG1L. Interacts with RAB5IF. Post-translationally, in response to mitochondrial stress, the precursor protein is ubiquitinated by the SIFI complex in the cytoplasm before mitochondrial import, leading to its degradation. Within the SIFI complex, UBR4 initiates ubiquitin chain that are further elongated or branched by KCMF1.

Its subcellular location is the mitochondrion inner membrane. The protein operates within energy metabolism; oxidative phosphorylation. Its function is as follows. Component of the cytochrome c oxidase, the last enzyme in the mitochondrial electron transport chain which drives oxidative phosphorylation. The respiratory chain contains 3 multisubunit complexes succinate dehydrogenase (complex II, CII), ubiquinol-cytochrome c oxidoreductase (cytochrome b-c1 complex, complex III, CIII) and cytochrome c oxidase (complex IV, CIV), that cooperate to transfer electrons derived from NADH and succinate to molecular oxygen, creating an electrochemical gradient over the inner membrane that drives transmembrane transport and the ATP synthase. Cytochrome c oxidase is the component of the respiratory chain that catalyzes the reduction of oxygen to water. Electrons originating from reduced cytochrome c in the intermembrane space (IMS) are transferred via the dinuclear copper A center (CU(A)) of subunit 2 and heme A of subunit 1 to the active site in subunit 1, a binuclear center (BNC) formed by heme A3 and copper B (CU(B)). The BNC reduces molecular oxygen to 2 water molecules using 4 electrons from cytochrome c in the IMS and 4 protons from the mitochondrial matrix. This chain is Cytochrome c oxidase subunit 5A, mitochondrial (COX5A), found in Papio anubis (Olive baboon).